The primary structure comprises 264 residues: MKPTTISHLRQWKQEQRKFATITAYDASFSRLFFEQGIRVMLVGDSLGMTVQGHDSTLPVTTHDIVYHTQCVRRGAPLALVLSDMPFMTYATPEQTFSQAAELMRAGANMVKLEGGSWLAPTVKMLTERAVPVCGHLGLTPQSVNIFGGYKIQGRSESDANQLLADALALEEAGAQLLVLECVPVALAKRVTEALSIPVIGIGAGNVTDGQILVMHDALGITGDSTPKFAKNFLAQSGDIRTAVRLYSQEVEQGIYPAEEHSFH.

Mg(2+) contacts are provided by aspartate 45 and aspartate 84. 3-methyl-2-oxobutanoate contacts are provided by residues 45-46 (DS), aspartate 84, and lysine 112. Glutamate 114 is a Mg(2+) binding site. The Proton acceptor role is filled by glutamate 181.

It belongs to the PanB family. As to quaternary structure, homodecamer; pentamer of dimers. Requires Mg(2+) as cofactor.

It localises to the cytoplasm. It carries out the reaction 3-methyl-2-oxobutanoate + (6R)-5,10-methylene-5,6,7,8-tetrahydrofolate + H2O = 2-dehydropantoate + (6S)-5,6,7,8-tetrahydrofolate. It functions in the pathway cofactor biosynthesis; (R)-pantothenate biosynthesis; (R)-pantoate from 3-methyl-2-oxobutanoate: step 1/2. Functionally, catalyzes the reversible reaction in which hydroxymethyl group from 5,10-methylenetetrahydrofolate is transferred onto alpha-ketoisovalerate to form ketopantoate. The protein is 3-methyl-2-oxobutanoate hydroxymethyltransferase of Pectobacterium atrosepticum (strain SCRI 1043 / ATCC BAA-672) (Erwinia carotovora subsp. atroseptica).